Consider the following 206-residue polypeptide: RNA pyrophosphohydrolase (206 aa).

The 144-residue stretch at 6–149 folds into the Nudix hydrolase domain; that stretch reads GYRPNVGIVL…KRGVYARALR (144 aa). Residues 38-59 carry the Nudix box motif; it reads GGMNTDETPVEAMYRELQEETG. The tract at residues 175 to 206 is disordered; that stretch reads MPGHTAGHDRPRKRPRSRGYWPKKAQGDVPPT.

It belongs to the Nudix hydrolase family. RppH subfamily. A divalent metal cation is required as a cofactor.

Its function is as follows. Accelerates the degradation of transcripts by removing pyrophosphate from the 5'-end of triphosphorylated RNA, leading to a more labile monophosphorylated state that can stimulate subsequent ribonuclease cleavage. The sequence is that of RNA pyrophosphohydrolase from Stenotrophomonas maltophilia (strain R551-3).